Reading from the N-terminus, the 197-residue chain is Large ribosomal subunit protein eL15 (197 aa).

Basic residues-rich tracts occupy residues 70–90 (PKGG…RMGK), 163–179 (RGKT…RKRG), and 187–197 (PSLRAHRRRGK). Disordered regions lie at residues 70-99 (PKGG…GKSK) and 163-197 (RGKT…RRGK).

Belongs to the eukaryotic ribosomal protein eL15 family.

The chain is Large ribosomal subunit protein eL15 from Methanopyrus kandleri (strain AV19 / DSM 6324 / JCM 9639 / NBRC 100938).